A 96-amino-acid chain; its full sequence is Progonadoliberin-1 (96 aa).

A signal peptide spans 1-26 (MHRKMAVKTLSVWLLLVGTLVPQHCC). Pyrrolidone carboxylic acid is present on Q27. G36 carries the post-translational modification Glycine amide.

The protein belongs to the GnRH family. Preoptic area of the brain.

Its subcellular location is the secreted. In terms of biological role, stimulates the secretion of gonadotropins. This chain is Progonadoliberin-1 (gnrh1), found in Verasper moseri (Barfin flounder).